A 114-amino-acid polypeptide reads, in one-letter code: Hemerythrin (114 aa).

Residues H26, H55, E59, H74, H78, H102, and D107 each coordinate Fe cation.

It belongs to the hemerythrin family. In terms of assembly, homooctamer.

Its function is as follows. Hemerythrin is a respiratory protein in blood cells of certain marine worms. The oxygen-binding site in each chain contains two iron atoms. This chain is Hemerythrin, found in Phascolopsis gouldii (Peanut worm).